A 304-amino-acid polypeptide reads, in one-letter code: Aspartate carbamoyltransferase catalytic subunit (304 aa).

Positions 54 and 55 each coordinate carbamoyl phosphate. L-aspartate is bound at residue K83. 3 residues coordinate carbamoyl phosphate: R104, H132, and Q135. L-aspartate-binding residues include R165 and R226. Residues L265 and P266 each coordinate carbamoyl phosphate.

The protein belongs to the aspartate/ornithine carbamoyltransferase superfamily. ATCase family. In terms of assembly, heterooligomer of catalytic and regulatory chains.

It catalyses the reaction carbamoyl phosphate + L-aspartate = N-carbamoyl-L-aspartate + phosphate + H(+). It participates in pyrimidine metabolism; UMP biosynthesis via de novo pathway; (S)-dihydroorotate from bicarbonate: step 2/3. Catalyzes the condensation of carbamoyl phosphate and aspartate to form carbamoyl aspartate and inorganic phosphate, the committed step in the de novo pyrimidine nucleotide biosynthesis pathway. This Pyrobaculum neutrophilum (strain DSM 2338 / JCM 9278 / NBRC 100436 / V24Sta) (Thermoproteus neutrophilus) protein is Aspartate carbamoyltransferase catalytic subunit.